Here is a 963-residue protein sequence, read N- to C-terminus: Kinesin-1 heavy chain (963 aa).

Ala2 bears the N-acetylalanine mark. The 318-residue stretch at 8–325 folds into the Kinesin motor domain; it reads NIKVMCRFRP…LLFGQRAKTI (318 aa). Residue 85–92 coordinates ATP; it reads GQTSSGKT. Residue Lys213 forms a Glycyl lysine isopeptide (Lys-Gly) (interchain with G-Cter in SUMO2) linkage. Residues 330–913 are a coiled coil; the sequence is CVNVELTAEQ…EAVRSKNMAR (584 aa). Residues 908–963 are disordered; the sequence is SKNMARRGHSAQIAKPIRPGQHPAASPTHPGAVRGGGSFVQNNQPVGLRGGGGKQA. Residues 915–963 are globular; it reads GHSAQIAKPIRPGQHPAASPTHPGAVRGGGSFVQNNQPVGLRGGGGKQA. Phosphoserine occurs at positions 933 and 945. Position 956 is an omega-N-methylarginine (Arg956).

The protein belongs to the TRAFAC class myosin-kinesin ATPase superfamily. Kinesin family. Kinesin subfamily. As to quaternary structure, oligomer composed of two heavy chains and two light chains. Interacts with GRIP1 and PPP1R42. Interacts with SYBU. Interacts with JAKMIP1. Interacts with PLEKHM2. Interacts with ECPAS. Interacts with ZFYVE27. Found in a complex with OGT, RHOT1, RHOT2 and TRAK1. Interacts with APP (via cytoplasmic domain). Expressed in the brain (at protein level). Expressed in the brain, liver, kidney, spleen, heart, lung and sciatic nerve.

Its subcellular location is the cytoplasm. The protein localises to the cytoskeleton. The protein resides in the cytolytic granule membrane. It localises to the lysosome membrane. In terms of biological role, microtubule-dependent motor required for normal distribution of mitochondria and lysosomes. Can induce formation of neurite-like membrane protrusions in non-neuronal cells in a ZFYVE27-dependent manner. Regulates centrosome and nuclear positioning during mitotic entry. During the G2 phase of the cell cycle in a BICD2-dependent manner, antagonizes dynein function and drives the separation of nuclei and centrosomes. Required for anterograde axonal transportation of MAPK8IP3/JIP3 which is essential for MAPK8IP3/JIP3 function in axon elongation. Through binding with PLEKHM2 and ARL8B, directs lysosome movement toward microtubule plus ends. Involved in NK cell-mediated cytotoxicity. Drives the polarization of cytolytic granules and microtubule-organizing centers (MTOCs) toward the immune synapse between effector NK lymphocytes and target cells. The sequence is that of Kinesin-1 heavy chain from Rattus norvegicus (Rat).